The chain runs to 663 residues: MSLARTILWLSRPLRPAHSLCRAQFMERKAQKPPSPPAMENGTRSWEERPPADPVATVTEGAAKIVFPSANEVFYNPVQEFNRDLTCAVITEFARIHLGAKGIQIKVPGEKDSEKIAVDLSDQEEETAGKNENLAPGDWPRTAAVGEICEEGLRVLEGLAASGLRSIRFALEVPGLQSVVANDASARAVELMHRNVELNGVAHLVQPNQADARMLMYQHQKAPERFDVIDLDPYGSPAPFLDAAVQAVSDGGLLCVTCTDMAVLAGNSGETCYSKYGAMALKSRACHEMALRIVLHSLDLHANCYQRYIVPLLSISADFYIRVFVRVFTGQAKVKSSASKQALVFQCVGCGAFYLQRLGKASGDPGGRIKFSAACGPPVTPECEHCGQRHQLGGPMWAEPIHDLDFVGRVLDAVTTNPGRFHTSMRIQGVLSVVTEELPDVPLYYTLDQLSSTIHCNTPRLLQLRSALLHAGFRVSLSHACKNAVKTDAPPEALWDIMRCWEKECPVKRERLSESSPAFRILAVEPRLKANFNIREDANPSSRQRGLKRFQANPEANWGPRPRARPGGKAASEDLAGRRRLLQNKRKEPAEDPAQRAARLKTFPCKRFKEGTCQLGDQCCYSHSPAAPVASGDIPIEECPETTTKISPGPKAAAGGIPGPGVD.

The N-terminal 16 residues, 1–16 (MSLARTILWLSRPLRP), are a transit peptide targeting the mitochondrion. Residues 56-498 (ATVTEGAAKI…APPEALWDIM (443 aa)) enclose the Trm1 methyltransferase domain. Arg83 contributes to the S-adenosyl-L-methionine binding site. Ser121 is modified (phosphoserine). Residues Arg165 and Asp183 each coordinate S-adenosyl-L-methionine. Zn(2+)-binding residues include Cys347, Cys350, Cys383, and Cys386. The residue at position 516 (Ser516) is a Phosphoserine. The interval 534-574 (IREDANPSSRQRGLKRFQANPEANWGPRPRARPGGKAASED) is disordered. Residues 540-572 (PSSRQRGLKRFQANPEANWGPRPRARPGGKAAS) carry the Nuclear localization signal motif. The C3H1-type zinc-finger motif lies at 599–626 (RLKTFPCKRFKEGTCQLGDQCCYSHSPA). Ser624 carries the post-translational modification Phosphoserine. A disordered region spans residues 632-663 (GDIPIEECPETTTKISPGPKAAAGGIPGPGVD).

Belongs to the class I-like SAM-binding methyltransferase superfamily. Trm1 family.

Its subcellular location is the mitochondrion. The protein resides in the nucleus. The protein localises to the cytoplasm. The enzyme catalyses guanosine(26) in tRNA + 2 S-adenosyl-L-methionine = N(2)-dimethylguanosine(26) in tRNA + 2 S-adenosyl-L-homocysteine + 2 H(+). Its function is as follows. Dimethylates a single guanine residue at position 26 of most nuclear- and mitochondrial-encoded tRNAs using S-adenosyl-L-methionine as donor of the methyl groups. tRNA guanine(26)-dimethylation is required for redox homeostasis and ensure proper cellular proliferation and oxidative stress survival. This chain is tRNA (guanine(26)-N(2))-dimethyltransferase, found in Mus musculus (Mouse).